The chain runs to 1736 residues: Centrosomal protein of 152 kDa (1736 aa).

Positions 1-60 are interaction with PLK4; that stretch reads MSLEFGSVALQTQNEDEEFDKEDFEREKELQQLLTDLPHDMLDDELSSPERHDSDCSMDG. The interval 1–127 is disordered; sequence MSLEFGSVAL…SGYSPPGKRE (127 aa). Composition is skewed to basic and acidic residues over residues 61-82 and 94-105; these read RAAEPHPSEHLERKWIERDILP and EENRSKTEDQHL. 6 coiled-coil regions span residues 228–481, 552–651, 692–776, 835–868, 950–1075, and 1205–1315; these read IIQL…AELG, HLVS…QEFD, LEVY…TERQ, AAVSKAEAAAVLAEEQARQVQQEKELATKEALRK, NVMS…YEED, and GHCF…KIKR. The disordered stretch occupies residues 571 to 592; sequence FQQSKDGDSGMETKTDTSEKTT. Residues 575 to 592 are compositionally biased toward basic and acidic residues; that stretch reads KDGDSGMETKTDTSEKTT. T1277 is modified (phosphothreonine). 4 disordered regions span residues 1416-1479, 1543-1562, 1574-1614, and 1677-1736; these read GTER…ASTA, EKNSSPRCISESRHTTLRSP, GSPT…SDST, and QQGK…SPLE. Positions 1462–1473 are enriched in basic and acidic residues; the sequence is RRLEESKHREMR. Composition is skewed to polar residues over residues 1576 to 1595 and 1603 to 1614; these read PTETDSIASEKSQGVGSQDS and PSSSPAWPSDST. N6-acetyllysine is present on K1714.

The protein belongs to the CEP152 family. Interacts (via N-terminus) with PLK4; the interaction is mutally exclusive with a PLK4:CEP192 interaction. Interacts (via C-terminus) with CPAP (via-N-terminus). Interacts with CINP. Interacts with CDK5RAP2, WDR62, CEP63 and CEP131. CEP63, CDK5RAP2, CEP152, WDR62 are proposed to form a stepwise assembled complex at the centrosome forming a ring near parental centrioles. Interacts with DEUP1; this interaction recruits CEP152 to the deuterosome. The interactions with CEP63 and DEUP1 are mutually exclusive. Interacts with CCDC66.

The protein localises to the cytoplasm. It localises to the cytoskeleton. It is found in the microtubule organizing center. The protein resides in the centrosome. Its subcellular location is the centriole. Functionally, necessary for centrosome duplication; the function also seems to involve CEP63, CDK5RAP2 and WDR62 through a stepwise assembled complex at the centrosome that recruits CDK2 required for centriole duplication. Acts as a molecular scaffold facilitating the interaction of PLK4 and CPAP, 2 molecules involved in centriole formation. Proposed to snatch PLK4 away from PLK4:CEP92 complexes in early G1 daughter centriole and to reposition PLK4 at the outer boundary of a newly forming CEP152 ring structure. Also plays a key role in deuterosome-mediated centriole amplification in multiciliated that can generate more than 100 centrioles. Overexpression of cep152 can drive amplification of centrioles. This chain is Centrosomal protein of 152 kDa (Cep152), found in Mus musculus (Mouse).